The sequence spans 954 residues: Glycine dehydrogenase (decarboxylating) (954 aa).

K704 carries the post-translational modification N6-(pyridoxal phosphate)lysine.

The protein belongs to the GcvP family. The glycine cleavage system is composed of four proteins: P, T, L and H. Requires pyridoxal 5'-phosphate as cofactor.

The catalysed reaction is N(6)-[(R)-lipoyl]-L-lysyl-[glycine-cleavage complex H protein] + glycine + H(+) = N(6)-[(R)-S(8)-aminomethyldihydrolipoyl]-L-lysyl-[glycine-cleavage complex H protein] + CO2. Its function is as follows. The glycine cleavage system catalyzes the degradation of glycine. The P protein binds the alpha-amino group of glycine through its pyridoxal phosphate cofactor; CO(2) is released and the remaining methylamine moiety is then transferred to the lipoamide cofactor of the H protein. The sequence is that of Glycine dehydrogenase (decarboxylating) from Agrobacterium fabrum (strain C58 / ATCC 33970) (Agrobacterium tumefaciens (strain C58)).